The following is a 167-amino-acid chain: Low molecular mass early light-inducible protein HV60, chloroplastic (167 aa).

Residues 1 to 33 (MATMMAMSSFAGAAVLPRGSARSLPALGRRTLV) constitute a chloroplast transit peptide. 2 consecutive transmembrane segments (helical) span residues 101–121 (GQAW…VPLL) and 145–165 (FAMI…TPFI).

The protein belongs to the ELIP/psbS family.

It localises to the plastid. Its subcellular location is the chloroplast membrane. In terms of biological role, probably involved in the integration of pigments into the mature pigment-protein complexes. This chain is Low molecular mass early light-inducible protein HV60, chloroplastic, found in Hordeum vulgare (Barley).